The chain runs to 235 residues: Phosphoribosylaminoimidazole-succinocarboxamide synthase (235 aa).

This sequence belongs to the SAICAR synthetase family.

The enzyme catalyses 5-amino-1-(5-phospho-D-ribosyl)imidazole-4-carboxylate + L-aspartate + ATP = (2S)-2-[5-amino-1-(5-phospho-beta-D-ribosyl)imidazole-4-carboxamido]succinate + ADP + phosphate + 2 H(+). It functions in the pathway purine metabolism; IMP biosynthesis via de novo pathway; 5-amino-1-(5-phospho-D-ribosyl)imidazole-4-carboxamide from 5-amino-1-(5-phospho-D-ribosyl)imidazole-4-carboxylate: step 1/2. The sequence is that of Phosphoribosylaminoimidazole-succinocarboxamide synthase from Chlorobaculum parvum (strain DSM 263 / NCIMB 8327) (Chlorobium vibrioforme subsp. thiosulfatophilum).